The following is a 592-amino-acid chain: Aspartate--tRNA ligase (592 aa).

Residue Glu-176 coordinates L-aspartate. An aspartate region spans residues 200–203 (QIFK). Arg-222 contacts L-aspartate. ATP is bound by residues 222 to 224 (RDE) and Gln-231. His-450 contributes to the L-aspartate binding site. Glu-484 serves as a coordination point for ATP. Residue Arg-491 participates in L-aspartate binding. An ATP-binding site is contributed by 536 to 539 (GLDR).

Belongs to the class-II aminoacyl-tRNA synthetase family. Type 1 subfamily. As to quaternary structure, homodimer.

The protein localises to the cytoplasm. The catalysed reaction is tRNA(Asp) + L-aspartate + ATP = L-aspartyl-tRNA(Asp) + AMP + diphosphate. Its function is as follows. Catalyzes the attachment of L-aspartate to tRNA(Asp) in a two-step reaction: L-aspartate is first activated by ATP to form Asp-AMP and then transferred to the acceptor end of tRNA(Asp). The polypeptide is Aspartate--tRNA ligase (Macrococcus caseolyticus (strain JCSC5402) (Macrococcoides caseolyticum)).